The chain runs to 25 residues: Germin-like protein (25 aa).

Belongs to the germin family.

The sequence is that of Germin-like protein from Populus euphratica (Euphrates poplar).